The primary structure comprises 188 residues: MASVSTNEFKGGLKFMLDNEPCSIIENEYVKPGKGQAFNRVKLRRLLSGKTLEKTFKSGESFELADVVDVELDYLYNDGEFYHFMNSVSFEQIAADVKAVGDTAKWLVENDTCTLTLWNDNPITVTPPNFVELEVTETDPGLKGDTQGTGGKPATLSTGAVVRVPLFIAIGEVVKVDTRTGEYVGRVK.

An N6-(3,6-diaminohexanoyl)-5-hydroxylysine modification is found at Lys34.

This sequence belongs to the elongation factor P family. Post-translationally, may be beta-lysylated on the epsilon-amino group of Lys-34 by the combined action of EpmA and EpmB, and then hydroxylated on the C5 position of the same residue by EpmC (if this protein is present). Lysylation is critical for the stimulatory effect of EF-P on peptide-bond formation. The lysylation moiety may extend toward the peptidyltransferase center and stabilize the terminal 3-CCA end of the tRNA. Hydroxylation of the C5 position on Lys-34 may allow additional potential stabilizing hydrogen-bond interactions with the P-tRNA.

The protein resides in the cytoplasm. Its pathway is protein biosynthesis; polypeptide chain elongation. In terms of biological role, involved in peptide bond synthesis. Alleviates ribosome stalling that occurs when 3 or more consecutive Pro residues or the sequence PPG is present in a protein, possibly by augmenting the peptidyl transferase activity of the ribosome. Modification of Lys-34 is required for alleviation. This is Elongation factor P from Aliivibrio fischeri (strain ATCC 700601 / ES114) (Vibrio fischeri).